We begin with the raw amino-acid sequence, 419 residues long: Esterase FrsA (419 aa).

This sequence belongs to the FrsA family.

It carries out the reaction a carboxylic ester + H2O = an alcohol + a carboxylate + H(+). Catalyzes the hydrolysis of esters. This chain is Esterase FrsA, found in Photobacterium profundum (strain SS9).